The following is a 199-amino-acid chain: Crossover junction endodeoxyribonuclease RuvC (199 aa).

Residues aspartate 17, glutamate 76, and aspartate 148 contribute to the active site. Mg(2+) contacts are provided by aspartate 17, glutamate 76, and aspartate 148.

The protein belongs to the RuvC family. As to quaternary structure, homodimer which binds Holliday junction (HJ) DNA. The HJ becomes 2-fold symmetrical on binding to RuvC with unstacked arms; it has a different conformation from HJ DNA in complex with RuvA. In the full resolvosome a probable DNA-RuvA(4)-RuvB(12)-RuvC(2) complex forms which resolves the HJ. Mg(2+) serves as cofactor.

It localises to the cytoplasm. It carries out the reaction Endonucleolytic cleavage at a junction such as a reciprocal single-stranded crossover between two homologous DNA duplexes (Holliday junction).. The RuvA-RuvB-RuvC complex processes Holliday junction (HJ) DNA during genetic recombination and DNA repair. Endonuclease that resolves HJ intermediates. Cleaves cruciform DNA by making single-stranded nicks across the HJ at symmetrical positions within the homologous arms, yielding a 5'-phosphate and a 3'-hydroxyl group; requires a central core of homology in the junction. The consensus cleavage sequence is 5'-(A/T)TT(C/G)-3'. Cleavage occurs on the 3'-side of the TT dinucleotide at the point of strand exchange. HJ branch migration catalyzed by RuvA-RuvB allows RuvC to scan DNA until it finds its consensus sequence, where it cleaves and resolves the cruciform DNA. The protein is Crossover junction endodeoxyribonuclease RuvC of Mannheimia succiniciproducens (strain KCTC 0769BP / MBEL55E).